The following is a 150-amino-acid chain: Ribosomal RNA large subunit methyltransferase H (150 aa).

S-adenosyl-L-methionine contacts are provided by residues L68, G97, and L116–L121.

The protein belongs to the RNA methyltransferase RlmH family. Homodimer.

It is found in the cytoplasm. The catalysed reaction is pseudouridine(1915) in 23S rRNA + S-adenosyl-L-methionine = N(3)-methylpseudouridine(1915) in 23S rRNA + S-adenosyl-L-homocysteine + H(+). Its function is as follows. Specifically methylates the pseudouridine at position 1915 (m3Psi1915) in 23S rRNA. The protein is Ribosomal RNA large subunit methyltransferase H of Prochlorococcus marinus (strain MIT 9303).